The sequence spans 40 residues: Large ribosomal subunit protein bL36A (40 aa).

The protein belongs to the bacterial ribosomal protein bL36 family.

In Paenarthrobacter aurescens (strain TC1), this protein is Large ribosomal subunit protein bL36A.